Consider the following 161-residue polypeptide: Protein translocase subunit SecE (161 aa).

Residues 1-12 (MSDEGDVADEAV) show a composition bias toward acidic residues. Positions 1 to 80 (MSDEGDVADE…GVAKDDSTTK (80 aa)) are disordered. A helical membrane pass occupies residues 133 to 153 (VVLAFLAFMVALVAGADLGLT).

Belongs to the SecE/SEC61-gamma family. In terms of assembly, component of the Sec protein translocase complex. Heterotrimer consisting of SecY, SecE and SecG subunits. The heterotrimers can form oligomers, although 1 heterotrimer is thought to be able to translocate proteins. Interacts with the ribosome. Interacts with SecDF, and other proteins may be involved. Interacts with SecA.

It is found in the cell membrane. Functionally, essential subunit of the Sec protein translocation channel SecYEG. Clamps together the 2 halves of SecY. May contact the channel plug during translocation. The sequence is that of Protein translocase subunit SecE from Mycobacterium bovis (strain ATCC BAA-935 / AF2122/97).